The following is a 384-amino-acid chain: MKSNTYELHNYADLNDMARATDSKDSRKRKTASARGEKYSLRQKRQKRGSNEDGESANLADFQLELDPIAEPASKSRKNAPTKSKTKAPPLSKYRRKTANARERTRMREINTAFETLRHCVPEAIKGEDAANTNEKLTKITTLRLAMKYITMLTDSIRDPSYESEFIGECLEESANREARVDLEANEEAEVELPVPVAKKPAKTKGSGKKSSAASKRQSQKQAKIVPQIPPISSGESCYATSSIGSPASSAYASLSSSSNSHSSSSSPGLELDSLVGLNGISALDSLLLDTSDGDSLSCLSPGYGSLLTGSGESLLPGCRGDLPMSGLEKSDVELSLRLLDQSSKDSFDFASDQQPSACISSFSALDGYPFDLLHSDFPDMFLT.

Disordered regions lie at residues 1–101 and 187–227; these read MKSN…TANA and EEAE…KIVP. The segment covering 75–86 has biased composition (basic residues); sequence KSRKNAPTKSKT. The 60-residue stretch at 94–153 folds into the bHLH domain; it reads YRRKTANARERTRMREINTAFETLRHCVPEAIKGEDAANTNEKLTKITTLRLAMKYITML. A compositionally biased stretch (low complexity) spans 209–224; that stretch reads KKSSAASKRQSQKQAK.

Efficient DNA binding requires dimerization with another bHLH protein, possibly with da. Expressed almost exclusively in the attachments sites of the somatic muscles to tendon cells in the epidermis.

The protein resides in the nucleus. Probably plays an important role in the differentiation of epidermal cells into the tendon cells that form the attachment sites for all muscles. In Drosophila melanogaster (Fruit fly), this protein is Helix-loop-helix protein delilah (tx).